The sequence spans 384 residues: Na(+)/H(+) antiporter NhaA (384 aa).

Transmembrane regions (helical) follow at residues N9–A29, L58–I78, L94–F114, G124–G144, I153–F173, S179–F199, I204–H224, V256–L276, V285–L305, V325–L345, and M357–L377.

Belongs to the NhaA Na(+)/H(+) (TC 2.A.33) antiporter family.

The protein localises to the cell inner membrane. The catalysed reaction is Na(+)(in) + 2 H(+)(out) = Na(+)(out) + 2 H(+)(in). Functionally, na(+)/H(+) antiporter that extrudes sodium in exchange for external protons. The protein is Na(+)/H(+) antiporter NhaA of Legionella pneumophila (strain Lens).